Consider the following 352-residue polypeptide: Histidine protein kinase SaeS (352 aa).

2 helical membrane-spanning segments follow: residues 9 to 29 (QIII…VIAY) and 41 to 61 (TLAI…SIFI). In terms of domain architecture, Histidine kinase spans 130–349 (NLAHDLKTPL…TMTLTLKKFQ (220 aa)). Histidine 133 carries the post-translational modification Phosphohistidine; by autocatalysis.

Autophosphorylated.

It localises to the cell membrane. The enzyme catalyses ATP + protein L-histidine = ADP + protein N-phospho-L-histidine.. In terms of biological role, member of the two-component regulatory system SaeR/SaeS. Probably functions as a membrane-associated protein kinase that upon sensing the appropriate signal, autophosphorylates and in turn activates the cytosolic response regulator SaeR. This is Histidine protein kinase SaeS (saeS) from Staphylococcus epidermidis (strain ATCC 35984 / DSM 28319 / BCRC 17069 / CCUG 31568 / BM 3577 / RP62A).